We begin with the raw amino-acid sequence, 346 residues long: HLA class I histocompatibility antigen, alpha chain F (346 aa).

The first 21 residues, 1–21, serve as a signal peptide directing secretion; that stretch reads MAPRSLLLLLSGALALTDTWA. The segment at 22–111 is alpha-1; that stretch reads GSHSLRYFST…LLRRYNQSEA (90 aa). At 22–305 the chain is on the extracellular side; that stretch reads GSHSLRYFST…EQSPQPTIPI (284 aa). Residues Asn-91 and Arg-105 each contribute to the a peptide antigen site. The N-linked (GlcNAc...) asparagine glycan is linked to Asn-107. The segment at 112–203 is alpha-2; sequence GSHTLQGMNG…ENGKETLQRA (92 aa). Intrachain disulfides connect Cys-122/Cys-185 and Cys-224/Cys-280. A peptide antigen is bound by residues Thr-164, Tyr-168, and Glu-176. The tract at residues 204-295 is alpha-3; the sequence is DPPKAHVAHH…GLPQPLILRW (92 aa). The 91-residue stretch at 206-296 folds into the Ig-like C1-type domain; it reads PKAHVAHHPI…LPQPLILRWE (91 aa). The tract at residues 296–305 is connecting peptide; that stretch reads EQSPQPTIPI. Residues 306-329 traverse the membrane as a helical segment; sequence VGIVAGLVVLGAVVTGAVVAAVMW. Topologically, residues 330–346 are cytoplasmic; the sequence is RKKSSDRNRGSYSQAAV. A Sorting signal sequence; Golgi-retention signal; ER-retention signal motif is present at residues 336-338; sequence RNR.

This sequence belongs to the MHC class I family. Forms a heterotrimer with B2M and a self-peptide. Binds a diverse number of peptides ranging from 7 to more than 30 amino acids. Peptide-bound HLA-F-B2M interacts with LILRB1 and LILRB2 but not with KIR3DS1 or KIR3DL2; this interaction is direct. The OC form interacts with KIR3DS1, KIR2DS4 and KIR3DL2; this interaction is direct. Interacts with TAP1-TAP2 complex and CALR; this interaction is required for appropriate folding and peptide loading. Interacts with the coat protein complex II and 14-3-3 proteins; these interactions likely control the anterograde ER-to-Golgi transport of HLA-F. HLA-F-B2M complex interacts with the heavy chain of other MHC class I molecules including HLA-A and HLA-E; this interaction may regulate the intracellular trafficking and the stability of peptide-free MHC class I OCs. In terms of processing, N-glycosylated. As to expression, expressed in resting B cells (at protein level). Expressed in secondary lymphoid organs rich in B and T cells such as the tonsils, spleen, and thymus (at protein level). Expressed in the endothelial cells of the tonsils. Expressed on activated lymphoid cells including B cells, NK cells, CD4+ T cells and memory T cells (at protein level). Expressed in motor neurons of spinal cord.

The protein resides in the cell membrane. It is found in the early endosome membrane. The protein localises to the lysosome membrane. Non-classical major histocompatibility class Ib molecule postulated to play a role in immune surveillance, immune tolerance and inflammation. Functions in two forms, as a heterotrimeric complex with B2M/beta-2 microglobulin and a peptide (peptide-bound HLA-F-B2M) and as an open conformer (OC) devoid of peptide and B2M (peptide-free OC). In complex with B2M, presents non-canonical self-peptides carrying post-translational modifications, particularly phosphorylated self-peptides. Peptide-bound HLA-F-B2M acts as a ligand for LILRB1 inhibitory receptor, a major player in maternal-fetal tolerance. Peptide-free OC acts as a ligand for KIR3DS1 and KIR3DL2 receptors. Upon interaction with activating KIR3DS1 receptor on NK cells, triggers NK cell degranulation and anti-viral cytokine production. Through interaction with KIR3DL2 receptor, inhibits NK and T cell effector functions. May interact with other MHC class I OCs to cross-present exogenous viral, tumor or minor histompatibility antigens to cytotoxic CD8+ T cells, triggering effector and memory responses. May play a role in inflammatory responses in the peripheral nervous system. Through interaction with KIR3DL2, may protect motor neurons from astrocyte-induced toxicity. In Homo sapiens (Human), this protein is HLA class I histocompatibility antigen, alpha chain F.